We begin with the raw amino-acid sequence, 180 residues long: Large ribosomal subunit protein uL5 (180 aa).

It belongs to the universal ribosomal protein uL5 family. In terms of assembly, part of the 50S ribosomal subunit; part of the 5S rRNA/L5/L18/L25 subcomplex. Contacts the 5S rRNA and the P site tRNA. Forms a bridge to the 30S subunit in the 70S ribosome.

In terms of biological role, this is one of the proteins that bind and probably mediate the attachment of the 5S RNA into the large ribosomal subunit, where it forms part of the central protuberance. In the 70S ribosome it contacts protein S13 of the 30S subunit (bridge B1b), connecting the 2 subunits; this bridge is implicated in subunit movement. Contacts the P site tRNA; the 5S rRNA and some of its associated proteins might help stabilize positioning of ribosome-bound tRNAs. This Roseiflexus castenholzii (strain DSM 13941 / HLO8) protein is Large ribosomal subunit protein uL5.